Consider the following 161-residue polypeptide: Tropomyosin (161 aa).

A coiled-coil region spans residues 1-161 (MDKLREKINA…DEVHQALEDL (161 aa)). Over residues 40 to 52 (EQEYESLSRKSEA) the composition is skewed to basic and acidic residues. Disordered regions lie at residues 40-65 (EQEY…EETK) and 107-134 (EKMR…DDME).

Homodimer.

The protein resides in the cytoplasm. It is found in the cytoskeleton. Functionally, forms part of the F-actin contractile ring during cytokinesis. This Schizosaccharomyces pombe (strain 972 / ATCC 24843) (Fission yeast) protein is Tropomyosin (cdc8).